A 264-amino-acid chain; its full sequence is Myozenin-2 (264 aa).

Position 53 is an omega-N-methylarginine (R53). The segment at 90 to 135 (GKVDGSNLEGGSQQAPLTPPNTPDPRSPPNPDNIAPGYSGPLKEIP) is disordered. Position 101 is a phosphoserine (S101). The segment covering 106-120 (LTPPNTPDPRSPPNP) has biased composition (pro residues). Phosphothreonine is present on residues T107 and T111. S116 carries the post-translational modification Phosphoserine.

The protein belongs to the myozenin family. As to quaternary structure, interacts via its C-terminus with spectrin repeats 3 and 4 of ACTN2. Interacts with ACTN1, LDB3, MYOT and PPP3CA.

Its subcellular location is the cytoplasm. It localises to the myofibril. The protein localises to the sarcomere. The protein resides in the z line. Myozenins may serve as intracellular binding proteins involved in linking Z line proteins such as alpha-actinin, gamma-filamin, TCAP/telethonin, LDB3/ZASP and localizing calcineurin signaling to the sarcomere. Plays an important role in the modulation of calcineurin signaling. May play a role in myofibrillogenesis. This Pongo abelii (Sumatran orangutan) protein is Myozenin-2 (MYOZ2).